A 68-amino-acid chain; its full sequence is Purkinje cell protein 4-like protein 1 (68 aa).

The segment covering 1–16 (MSELNTKTPPAANQAS) has biased composition (polar residues). Positions 1–42 (MSELNTKTPPAANQASDPEEKGKPGSIKKAEEEEEIDIDLTA) are disordered. T8 is modified (phosphothreonine). The segment covering 18 to 31 (PEEKGKPGSIKKAE) has biased composition (basic and acidic residues). The IQ domain maps to 45–68 (TEKAALAIQGKFRRFQKRKKDSSS).

Belongs to the PCP4 family. As to expression, expressed in laminar and nuclear structures of the CNS.

The sequence is that of Purkinje cell protein 4-like protein 1 (Pcp4l1) from Mus musculus (Mouse).